We begin with the raw amino-acid sequence, 1929 residues long: MISYEPPPSAISNPTDPGGTTIIQGDGENDEEEDRDIVDAGFNPSVPGAPGQTDTQIARRLVKGKKTRRILSNKPQDFQIRIRVIEGRQLPGNNIKPVVKVSVGGQTHRTRIKRGNNPYFDEIFFYNVNMTPLELLDESVIFRLFNSGSIRADSLIGEFKLDVGYIYDEPGHAVMRKWVLLNDPDDSSSGAKGYLKVSMFVVGTGDEPPVEKRDREMEDDDVESNLLLPAGVALRWVTFFLKIYRAEDIPQMDDAFAQTVKEIFGADSDKKNLVDPFVEVSFAGKKVCTNRIEKNANPEWNQAVNLQIKFPSMCENIKLTVYDWDRLTKNDAVGTTCLSLSKIAASGGEIEEYDSTGTGSSSLEATTEKEVGFLPTFGPCYLNLYGSPREYTGFPDPYDDLNFGKGEGVAYRGRVLVELTTKLDNSSIKKIEDISSDDILVVEKYQRRRKYCLCAVFHSATMIQDIGEAIQFEVSIGNYGNKFDSTCKPLASTTQYSRPIFDGNYYYYLPWSFTKPVVTLTSYWEDISHRLDIVNILIAMTDRLQSNISTLKSAIQAKLPDVRLAEIWMRLIDQLIEDTMRPMPSLEGKANVTVLDKQRDKLRQTSLKYIQEAAIKMRGEATDVKATLTEIEDWLDRLQQLSEEPQNSMPDVIIWMIRAEKRLAYARVPAHQVLFSKTSEEACGKYCGKTQTVFLQYPLDKTKGLKIPTELRVNIWLGLSEVEKKFNSYSEGTFSVYAEMYENQALLLGKWGTTGLLKRHKFSDVTGSIKLKRESFLPPKGWEWEDDWKVDPERSLLTEADAGHTEFTDEIFENEARYPGGEWKKADETFTDANGEKSASPSDLSCPFGWIWDDDGWMRDINRAVDENGWEYGLTIPPDSKPKSWVAAEKMYHTNRRRRLVRKRKKDPKVSTTSKAALTPQEQEGWEYAALIGWKFHITPRSSDTFRRRRWRRKMAPSDQHGAAAIFKLEGALGTDMTEDEEKKGSEKQTATNVFGANTPIVSCTFDKFYTYHLRCYIYQARGLTPLDKDSFSDPYAHVSFLHRSKTTETIRSTLNPTWDQTLIFNTIDIYGDPHAVAQNPPNVVIEIFDYDQVGKDEFLGRSVCMPMVKLNPEVDIAPKLLWYPVMNSNKHCGDLLLAAELIIREKDGSNLPILPSQRAPQIYMVPQGIRPVVQLTAIEILTWGLRNMKSYQLASVTSPSLIVECGGEIVETAVIKNLKKTPNFYSSVLFMKVLLPKDEMYVPPIIIKIVDHRPFGRKPVVGQCTIECLEEFRCDPYLTKHEDAPELRVARLTSSPLRDVVIEVEDTKPLLANQLQEKEEEVVDWWSKYYASTGETEKCGQYIQKGYTTLKVYKCELENVSEFRGLTDFCDTFKLYRGKAEDSDDPSVVGEFKGSFRIYPLPDDPNIPYPPRQFLELPGTESQECIVRIYIVRGIDLQPKDNNGLCDPYIKITLNKKVIEDRDHYIPNTLNPLFGRMYELSCFLPQEKDLKISVYDYDTLTRDEKVGETTIDLENRFLSRFGSHCGLPQTYCISGINQWRDQLTPTQILQNFARLKSSPPPVFSDNGTRLTFSSKDYTLEEFENNRKIHQHLGPPNERLALYVLRTQGLVPEHVETRTLYSTFQPNISQGKLEMWVDVFPKSLGPPGPPFNITPRKAKKYVLRVIVWNTKDVILDEKSITGEEMSDIYVKGWIPGNEENKQKTDVHYRSLDGEGNFNWRFVFPFEYLPAEQLCIVSKKEHFWSLDKTEFKLPPKLILQIWDNDKFSLDDYLGFVELDLHRTTIPAKVPEKCSFNLLDQDKHSKVASLFEQKSMKGWWPCHAEKDGKRILAGKIEMTLEVLNEKDAEERPAGKGRDEPNMNPKLDPPNRPDTSFLWFTNPCKTMKFIIWRRFKWVFIGLIILLLVLLFLGVFFYSLPGYVSMKIVKPNL.

Residues 1 to 53 (MISYEPPPSAISNPTDPGGTTIIQGDGENDEEEDRDIVDAGFNPSVPGAPGQT) form a disordered region. Over residues 27-36 (GENDEEEDRD) the composition is skewed to acidic residues. C2 domains are found at residues 62–179 (VKGK…RKWV) and 218–354 (EDDD…EEYD). Residues Asp267, Asp275, Asp323, Asp325, and Asp331 each coordinate Ca(2+). The segment covering 898-907 (RRLVRKRKKD) has biased composition (basic residues). A disordered region spans residues 898–918 (RRLVRKRKKDPKVSTTSKAAL). 4 consecutive C2 domains span residues 996–1124 (GANT…LLWY), 1159–1283 (RAPQ…TKHE), 1408–1527 (IPYP…SHCG), and 1645–1793 (GPPG…EKCS). Ca(2+) is bound by residues Asp1028, Asp1034, Asp1090, and Asp1092. Ca(2+) contacts are provided by Asp1442, Asp1448, Asp1497, Asp1499, Asp1764, Ser1767, and Asp1770. Positions 1845–1858 (DAEERPAGKGRDEP) are enriched in basic and acidic residues. Residues 1845-1867 (DAEERPAGKGRDEPNMNPKLDPP) are disordered. The chain crosses the membrane as a helical span at residues 1894 to 1914 (WVFIGLIILLLVLLFLGVFFY).

The protein belongs to the ferlin family. Requires Ca(2+) as cofactor.

It is found in the cell membrane. The protein localises to the nucleus membrane. Its subcellular location is the cytoplasmic vesicle membrane. Its function is as follows. May play a role in membrane regeneration and repair. The protein is Myoferlin (myof) of Xenopus tropicalis (Western clawed frog).